A 238-amino-acid chain; its full sequence is Lytic polysaccharide monooxygenase NCU01050 (238 aa).

A signal peptide spans 1-15 (MKVLAPLVLASAASA). Cu(2+) is bound at residue histidine 16. O2 is bound at residue glutamate 45. 2 disulfides stabilise this stretch: cysteine 54–cysteine 186 and cysteine 156–cysteine 238. N-linked (GlcNAc...) asparagine glycosylation occurs at asparagine 75. Histidine 99 is a Cu(2+) binding site. O2 contacts are provided by histidine 172 and glutamine 181. Histidine 172 (proton donor) is an active-site residue. Tyrosine 183 is a Cu(2+) binding site.

It belongs to the polysaccharide monooxygenase AA9 family. In terms of assembly, monomer. It depends on Cu(2+) as a cofactor. In terms of processing, N-linked glycans containing mannose and N-acetylglucosamine.

The protein localises to the secreted. The catalysed reaction is [(1-&gt;4)-beta-D-glucosyl]n+m + reduced acceptor + O2 = 4-dehydro-beta-D-glucosyl-[(1-&gt;4)-beta-D-glucosyl]n-1 + [(1-&gt;4)-beta-D-glucosyl]m + acceptor + H2O.. It participates in glycan metabolism; cellulose degradation. Inhibited by increasing levels of ascorbic acid. Functionally, catalyzes the oxidative cleavage of glycosidic bonds in cellulosic substrates via a copper-dependent mechanism. In the presence of an exogenous reductant ascorbic acid, degrades phosphoric acid swollen cellulose (PASC) to cello-oligosaccharides and 4-ketoaldoses, the end products oxidized at the non-reducing end. Somewhat active toward tamarind xyloglucan and konjac glucomannan, with improved activity with glucomannan in the presence of PASC. H(2)O(2) is able to substitute for O(2) in reactions with PASC, xyloglucan and glucomannan. Very weak activity on cellopentaose. No activity with birchwood xylan or ivory nut mannan. Disrupts plant cell wall polysaccharide substrates, such as recalcitrant crystalline cellulose. The sequence is that of Lytic polysaccharide monooxygenase NCU01050 from Neurospora crassa (strain ATCC 24698 / 74-OR23-1A / CBS 708.71 / DSM 1257 / FGSC 987).